Here is a 473-residue protein sequence, read N- to C-terminus: Maltose fermentation regulatory protein MAL13 (473 aa).

A DNA-binding region (zn(2)-C6 fungal-type) is located at residues 13 to 39; the sequence is CDCCRIRRVKCDGKRPCSSCLQNSLDC. Positions 46–54 match the Nuclear localization signal motif; the sequence is RKRGPKSIR.

It belongs to the MAL13 family.

It is found in the nucleus. Its function is as follows. Regulates the coordinate transcription of structural MAL1S (maltase) and AGT1 (maltose permease) genes. This Saccharomyces cerevisiae (strain ATCC 204508 / S288c) (Baker's yeast) protein is Maltose fermentation regulatory protein MAL13 (MAL13).